Reading from the N-terminus, the 269-residue chain is Serine/threonine-protein kinase ZRK7 (269 aa).

Residues 80 to 269 form the Protein kinase domain; the sequence is FDWSYAIGVD…KNRLMVTVIT (190 aa). ATP-binding positions include 86-94 and K106; that span reads IGVDRFVWY. Residue D205 is the Proton acceptor of the active site.

This sequence belongs to the protein kinase superfamily. Ser/Thr protein kinase family. ZRK subfamily.

The enzyme catalyses L-seryl-[protein] + ATP = O-phospho-L-seryl-[protein] + ADP + H(+). It carries out the reaction L-threonyl-[protein] + ATP = O-phospho-L-threonyl-[protein] + ADP + H(+). This chain is Serine/threonine-protein kinase ZRK7, found in Arabidopsis thaliana (Mouse-ear cress).